Consider the following 809-residue polypeptide: AP-3 complex subunit beta (809 aa).

5 HEAT repeats span residues 37-76 (YYSQ…DDDS), 112-151 (DPNL…SSLA), 153-186 (IILH…AGKN), 187-224 (DYHE…DHLE), and 524-561 (KICP…YDID). Phosphoserine is present on residues serine 693, serine 698, serine 724, and serine 726. Disordered stretches follow at residues 708-739 (FTSS…FTSQ) and 763-809 (PRKI…HLEL). The segment covering 722–739 (GDSNSISGKGNVNTFTSQ) has biased composition (polar residues). Positions 772–791 (ESSDEDEDESEESSDDDEYS) are enriched in acidic residues. Residues 792–809 (DSSLGTSSSGTSSSHLEL) are compositionally biased toward low complexity.

This sequence belongs to the adaptor complexes large subunit family. Adaptor protein complex 3 (AP-3) is a heterotetramer composed of 2 large adaptins (APL5 and APL6), a medium adaptin (APM3) and a small adaptin (APS3). In terms of processing, pyrophosphorylated by 5-diphosphoinositol pentakisphosphate (5-IP7). Serine pyrophosphorylation is achieved by Mg(2+)-dependent, but enzyme independent transfer of a beta-phosphate from a inositol pyrophosphate to a pre-phosphorylated serine residue.

It localises to the golgi apparatus. The protein localises to the cytoplasmic vesicle. The protein resides in the clathrin-coated vesicle membrane. Its function is as follows. Part of the AP-3 complex, an adaptor-related complex which is not clathrin-associated. The complex is associated with the Golgi region as well as more peripheral structures. It facilitates the budding of vesicles from the Golgi membrane and may be directly involved in trafficking to the vacuole. Required for the transport via the ALP pathway, which directs the transport of the cargo proteins PHO8 and VAM3 to the vacuole. The sequence is that of AP-3 complex subunit beta (APL6) from Saccharomyces cerevisiae (strain ATCC 204508 / S288c) (Baker's yeast).